Here is a 345-residue protein sequence, read N- to C-terminus: Nuclear distribution protein nudE-like 1 (345 aa).

Residues 28 to 190 (QSFQEARDEL…LAVRERQQEV (163 aa)) adopt a coiled-coil conformation. A self-association region spans residues 56–166 (VQAEQRNRDL…LDEKESLLVS (111 aa)). Residues 64–189 (DLQADNQRLK…ELAVRERQQE (126 aa)) are interaction with KATNB1. The segment at 114–133 (YVRELEQANDDLERAKRATI) is required for interaction with PAFAH1B1. Residues 175–345 (RDLRQELAVR…SAPGMLPLSV (171 aa)) are interaction with CENPF. Positions 189 to 256 (EVTRKSAPSS…SARISALNIV (68 aa)) are interaction with YWHAE. The tract at residues 191-345 (TRKSAPSSPT…SAPGMLPLSV (155 aa)) is interaction with NEFL. Positions 195–256 (APSSPTLDCE…SARISALNIV (62 aa)) are interaction with KATNA1. The residue at position 215 (Ser215) is a Phosphoserine. The tract at residues 217–240 (PATPVGKGTENSFPSPKAIPNGFG) is disordered. Thr219 is modified (phosphothreonine). Ser231 is modified (phosphoserine). The interval 241–280 (TSPLTPSARISALNIVGDLLRKVGALESKLAACRNFAKDQ) is interaction with DISC1. Ser242 bears the Phosphoserine; by CDK1 mark. Position 245 is a phosphothreonine; by CDK1 and MAPK1 (Thr245). The required for localization to the centrosome and interaction with dynein, dynactin, tubulin gamma, PCM1 and PCNT stretch occupies residues 256-291 (VGDLLRKVGALESKLAACRNFAKDQASRKSYVPGSV). Cys273 carries the S-palmitoyl cysteine; by ZDHHC2, ZDHHC3 and ZDHHC7 lipid modification. Residues 314-345 (KGAVNGFDPAPPPPGLGSSRPSSAPGMLPLSV) are disordered. Over residues 329–339 (LGSSRPSSAPG) the composition is skewed to low complexity. Residue Ser344 is modified to Phosphoserine.

This sequence belongs to the nudE family. Interacts with PLEKHM1 (via N- and C-terminus). Interacts with dynactin, PCM1 and PCNT. Interacts (via C-terminus) with CENPF. Self-associates. Interacts with DISC1, dynein, tubulin gamma, KATNA1, KATNB1, microtubules, PAFAHB1 and YWHAE. Interacts directly with NEFL and indirectly with NEFH. Interacts with ZNF365. Interacts with GTP-bound RAB9A; the interaction may lead to RAB9A-dynein motor tethering. Post-translationally, phosphorylated by CDK1 and MAPK1. Phosphorylated in mitosis. Phosphorylated by CDK5. Phosphorylation by CDK5 promotes interaction with KATNA1 and YWHAE. In terms of processing, palmitoylation at Cys-273 reduces affinity for dynein. Expressed in brain, liver, lung and testis (at protein level). Expressed in brain, epididymis, eye, heart, kidney, large intestine, liver, ovary, pancreas, prostate, skeletal muscle, smooth muscle, spleen, submaxillary gland, testis, thymus and thyroid. Within the brain expression is pronounced in the cortex, hippocampus, olfactory bulb, striatum, thalamic and hypothalamic structures and in the molecular layer of the cerebellum. Largely excluded from cortical progenitor cells which express NDE1.

The protein localises to the cytoplasm. Its subcellular location is the cytoskeleton. The protein resides in the microtubule organizing center. It is found in the centrosome. It localises to the chromosome. The protein localises to the centromere. Its subcellular location is the kinetochore. The protein resides in the spindle. Its function is as follows. Required for organization of the cellular microtubule array and microtubule anchoring at the centrosome. May regulate microtubule organization at least in part by targeting the microtubule severing protein KATNA1 to the centrosome. Also positively regulates the activity of the minus-end directed microtubule motor protein dynein. May enhance dynein-mediated microtubule sliding by targeting dynein to the microtubule plus ends. Required for several dynein- and microtubule-dependent processes such as the maintenance of Golgi integrity, the centripetal motion of secretory vesicles and the coupling of the nucleus and centrosome. Also required during brain development for the migration of newly formed neurons from the ventricular/subventricular zone toward the cortical plate. Plays a role, together with DISC1, in the regulation of neurite outgrowth. Required for mitosis in some cell types but appears to be dispensible for mitosis in cortical neuronal progenitors, which instead requires NDE1. Facilitates the polymerization of neurofilaments from the individual subunits NEFH and NEFL. Positively regulates lysosome peripheral distribution and ruffled border formation in osteoclasts. Plays a role, together with DISC1, in the regulation of neurite outgrowth. May act as a RAB9A/B effector that tethers RAB9-associated late endosomes to the dynein motor for their retrograde transport to the trans-Golgi network. The polypeptide is Nuclear distribution protein nudE-like 1 (Mus musculus (Mouse)).